The chain runs to 239 residues: Aspartate/glutamate leucyltransferase (239 aa).

It belongs to the R-transferase family. Bpt subfamily.

The protein resides in the cytoplasm. It carries out the reaction N-terminal L-glutamyl-[protein] + L-leucyl-tRNA(Leu) = N-terminal L-leucyl-L-glutamyl-[protein] + tRNA(Leu) + H(+). The catalysed reaction is N-terminal L-aspartyl-[protein] + L-leucyl-tRNA(Leu) = N-terminal L-leucyl-L-aspartyl-[protein] + tRNA(Leu) + H(+). Functions in the N-end rule pathway of protein degradation where it conjugates Leu from its aminoacyl-tRNA to the N-termini of proteins containing an N-terminal aspartate or glutamate. The polypeptide is Aspartate/glutamate leucyltransferase (Alkalilimnicola ehrlichii (strain ATCC BAA-1101 / DSM 17681 / MLHE-1)).